The chain runs to 98 residues: NADH-ubiquinone oxidoreductase chain 4L (98 aa).

A run of 3 helical transmembrane segments spans residues 2–22 (TPIF…TLIF), 29–49 (SLLC…LIIL), and 61–81 (ILLL…LVMV).

This sequence belongs to the complex I subunit 4L family. In terms of assembly, core subunit of respiratory chain NADH dehydrogenase (Complex I) which is composed of 45 different subunits.

Its subcellular location is the mitochondrion inner membrane. The catalysed reaction is a ubiquinone + NADH + 5 H(+)(in) = a ubiquinol + NAD(+) + 4 H(+)(out). Its function is as follows. Core subunit of the mitochondrial membrane respiratory chain NADH dehydrogenase (Complex I) which catalyzes electron transfer from NADH through the respiratory chain, using ubiquinone as an electron acceptor. Part of the enzyme membrane arm which is embedded in the lipid bilayer and involved in proton translocation. The sequence is that of NADH-ubiquinone oxidoreductase chain 4L (MT-ND4L) from Avahi cleesei (Cleese's woolly lemur).